The chain runs to 148 residues: Lysozyme C (148 aa).

The first 18 residues, 1–18 (MKALLLLGLLLLSVTVQG), serve as a signal peptide directing secretion. Residues 19–148 (KIFERCDLAR…VSQYVRNCGV (130 aa)) enclose the C-type lysozyme domain. 4 cysteine pairs are disulfide-bonded: Cys-24–Cys-146, Cys-48–Cys-134, Cys-83–Cys-99, and Cys-95–Cys-113. Catalysis depends on residues Glu-53 and Asp-71.

It belongs to the glycosyl hydrolase 22 family. In terms of assembly, monomer.

It carries out the reaction Hydrolysis of (1-&gt;4)-beta-linkages between N-acetylmuramic acid and N-acetyl-D-glucosamine residues in a peptidoglycan and between N-acetyl-D-glucosamine residues in chitodextrins.. Its function is as follows. Lysozymes have primarily a bacteriolytic function; those in tissues and body fluids are associated with the monocyte-macrophage system and enhance the activity of immunoagents. The chain is Lysozyme C (LYZ) from Halichoerus grypus (Gray seal).